Reading from the N-terminus, the 147-residue chain is MPVTVKVRRVGQRGPPLELPRYETDGAAGLDLRADEPVTLAPGERRLVPTGLALEIPPGHEGQVRPRSGLAVRHGVGMVNAPGTIDSDYRGEVGVVLVNHGQEPVTFARGDRIAQLVIGPVVRAELALVEDLASSGRGGGGFGSTGR.

Residues 67–69 (RSG), Asn-80, and 84–86 (TID) contribute to the substrate site.

This sequence belongs to the dUTPase family. The cofactor is Mg(2+).

It carries out the reaction dUTP + H2O = dUMP + diphosphate + H(+). The protein operates within pyrimidine metabolism; dUMP biosynthesis; dUMP from dCTP (dUTP route): step 2/2. In terms of biological role, this enzyme is involved in nucleotide metabolism: it produces dUMP, the immediate precursor of thymidine nucleotides and it decreases the intracellular concentration of dUTP so that uracil cannot be incorporated into DNA. This Anaeromyxobacter sp. (strain Fw109-5) protein is Deoxyuridine 5'-triphosphate nucleotidohydrolase.